Here is a 316-residue protein sequence, read N- to C-terminus: ATP synthase gamma chain (316 aa).

The protein belongs to the ATPase gamma chain family. As to quaternary structure, F-type ATPases have 2 components, CF(1) - the catalytic core - and CF(0) - the membrane proton channel. CF(1) has five subunits: alpha(3), beta(3), gamma(1), delta(1), epsilon(1). CF(0) has three main subunits: a, b and c.

It is found in the cellular thylakoid membrane. Its function is as follows. Produces ATP from ADP in the presence of a proton gradient across the membrane. The gamma chain is believed to be important in regulating ATPase activity and the flow of protons through the CF(0) complex. The polypeptide is ATP synthase gamma chain (Prochlorococcus marinus (strain MIT 9211)).